We begin with the raw amino-acid sequence, 106 residues long: ATP-dependent Clp protease adapter protein ClpS (106 aa).

It belongs to the ClpS family. In terms of assembly, binds to the N-terminal domain of the chaperone ClpA.

Its function is as follows. Involved in the modulation of the specificity of the ClpAP-mediated ATP-dependent protein degradation. This Vibrio cholerae serotype O1 (strain ATCC 39541 / Classical Ogawa 395 / O395) protein is ATP-dependent Clp protease adapter protein ClpS.